The chain runs to 283 residues: Elongation factor Ts (283 aa).

The interval Thr82–Val85 is involved in Mg(2+) ion dislocation from EF-Tu.

Belongs to the EF-Ts family.

The protein resides in the cytoplasm. Its function is as follows. Associates with the EF-Tu.GDP complex and induces the exchange of GDP to GTP. It remains bound to the aminoacyl-tRNA.EF-Tu.GTP complex up to the GTP hydrolysis stage on the ribosome. This chain is Elongation factor Ts, found in Photorhabdus laumondii subsp. laumondii (strain DSM 15139 / CIP 105565 / TT01) (Photorhabdus luminescens subsp. laumondii).